The sequence spans 331 residues: Terpene synthase 8 (331 aa).

The DDxx(x)D/E motif signature appears at 97–102 (DDFYLE). Positions 228–236 (NDIYSFNKE) match the NDxxSxxxD/E motif motif.

The protein belongs to the terpene synthase family.

In terms of biological role, terpene synthase that converts its substrate farnesyl diphosphate (FPP) into several yet unidentified sesquiterpenes. In Dictyostelium purpureum (Slime mold), this protein is Terpene synthase 8.